Reading from the N-terminus, the 813-residue chain is DNA ligase (813 aa).

NAD(+)-binding positions include 41–45 (DAEYD), 90–91 (SI), and Glu-127. Lys-129 functions as the N6-AMP-lysine intermediate in the catalytic mechanism. Arg-150, Glu-189, Lys-307, and Lys-331 together coordinate NAD(+). Positions 440, 443, 458, and 464 each coordinate Zn(2+). The 85-residue stretch at 729–813 (AEEGALSGKT…LLQNPPGDSA (85 aa)) folds into the BRCT domain.

This sequence belongs to the NAD-dependent DNA ligase family. LigA subfamily. Mg(2+) serves as cofactor. Mn(2+) is required as a cofactor.

It catalyses the reaction NAD(+) + (deoxyribonucleotide)n-3'-hydroxyl + 5'-phospho-(deoxyribonucleotide)m = (deoxyribonucleotide)n+m + AMP + beta-nicotinamide D-nucleotide.. Functionally, DNA ligase that catalyzes the formation of phosphodiester linkages between 5'-phosphoryl and 3'-hydroxyl groups in double-stranded DNA using NAD as a coenzyme and as the energy source for the reaction. It is essential for DNA replication and repair of damaged DNA. The chain is DNA ligase from Ralstonia nicotianae (strain ATCC BAA-1114 / GMI1000) (Ralstonia solanacearum).